The chain runs to 314 residues: F-box protein AUF2 (314 aa).

An F-box domain is found at 1-49; that stretch reads MDVFDGLPDPIIVDILNKVGDVKTLLRCSSLSKRFNSLVPQSESLTLRL.

Part of a SCF (ASK-cullin-F-box) protein ligase complex.

The protein resides in the nucleus. Its pathway is protein modification; protein ubiquitination. Functionally, component of SCF(ASK-cullin-F-box) E3 ubiquitin ligase complexes, which may mediate the ubiquitination and subsequent proteasomal degradation of target proteins. The protein is F-box protein AUF2 of Arabidopsis thaliana (Mouse-ear cress).